A 123-amino-acid polypeptide reads, in one-letter code: Ribonuclease P protein component (123 aa).

This sequence belongs to the RnpA family. Consists of a catalytic RNA component (M1 or rnpB) and a protein subunit.

The enzyme catalyses Endonucleolytic cleavage of RNA, removing 5'-extranucleotides from tRNA precursor.. RNaseP catalyzes the removal of the 5'-leader sequence from pre-tRNA to produce the mature 5'-terminus. It can also cleave other RNA substrates such as 4.5S RNA. The protein component plays an auxiliary but essential role in vivo by binding to the 5'-leader sequence and broadening the substrate specificity of the ribozyme. The protein is Ribonuclease P protein component of Streptomyces bikiniensis.